A 135-amino-acid chain; its full sequence is UPF0299 membrane protein Spro_1570 (135 aa).

The next 4 membrane-spanning stretches (helical) occupy residues L4–A24, A30–L50, G63–M83, and L93–Y113.

Belongs to the UPF0299 family.

Its subcellular location is the cell inner membrane. In Serratia proteamaculans (strain 568), this protein is UPF0299 membrane protein Spro_1570.